Consider the following 246-residue polypeptide: V-type proton ATPase subunit D (246 aa).

The protein belongs to the V-ATPase D subunit family. As to quaternary structure, V-ATPase is a heteromultimeric enzyme made up of two complexes: the ATP-hydrolytic V1 complex and the proton translocation V0 complex. The V1 complex consists of three catalytic AB heterodimers that form a heterohexamer, three peripheral stalks each consisting of EG heterodimers, one central rotor including subunits D and F, and the regulatory subunits C and H. The proton translocation complex V0 consists of the proton transport subunit a, a ring of proteolipid subunits c9c'', rotary subunit d, subunits e and f, and the accessory subunits VhaAC45 and ATP6AP2.

Subunit of the V1 complex of vacuolar(H+)-ATPase (V-ATPase), a multisubunit enzyme composed of a peripheral complex (V1) that hydrolyzes ATP and a membrane integral complex (V0) that translocates protons. V-ATPase is responsible for acidifying and maintaining the pH of intracellular compartments and in some cell types, is targeted to the plasma membrane, where it is responsible for acidifying the extracellular environment. The sequence is that of V-type proton ATPase subunit D from Manduca sexta (Tobacco hawkmoth).